We begin with the raw amino-acid sequence, 280 residues long: RAD52 motif-containing protein 1 (280 aa).

In terms of domain architecture, RRM spans 18-101; the sequence is KTIFIWDIQP…SPLKVRLSTK (84 aa).

In terms of assembly, homodimer.

Its subcellular location is the nucleus. The protein localises to the cytoplasm. The protein resides in the nucleolus. In terms of biological role, may confer resistance to the antitumor agent cisplatin. Binds to DNA and RNA. In Danio rerio (Zebrafish), this protein is RAD52 motif-containing protein 1 (rdm1).